Here is a 482-residue protein sequence, read N- to C-terminus: FAD-dependent monooxygenase esdpE (482 aa).

The first 21 residues, 1–21 (MGAERLKVIIVGGSIAGLTLA), serve as a signal peptide directing secretion. FAD-binding residues include Glu35 and Arg108. Residue Asn243 is glycosylated (N-linked (GlcNAc...) asparagine). FAD is bound by residues Asp308 and Ala321. The chain crosses the membrane as a helical span at residues 440-460 (LFSGSLLLIMSVALLFGVICW).

This sequence belongs to the paxM FAD-dependent monooxygenase family. Requires FAD as cofactor.

It is found in the membrane. The protein operates within secondary metabolite biosynthesis; terpenoid biosynthesis. FAD-dependent monooxygenase; part of the cluster that mediates the biosynthesis of shearones, diterpenoid pyrones (DPs) which are structurally diverse meroterpenoids consisting of a diterpene linked by a pyrone, and which may exhibit a range of bioactivities. Within the pathway, esdpE takes part to the biosynthesis of the molecular scaffold by catalyzing the formation of an (S)-epoxide ring at the terminal olefin of the geranylgeranyl group. The molecular scaffold is commonly biosynthesized by a series of enzymes including the non-reducing polyketide synthase (NR-PKS) esdpA that generates an alpha-pyrone; the prenyltransferase esdpC that attaches a geranylgeranyl pyrophosphate (GGPP) produced by the GGPP synthase (GGPPS) esdpD onto the pyrone unit; the FAD-dependent monooxygenase esdpE that converts an olefin on the diterpene unit into an epoxide; and the terpene cyclase esdpB that catalyzes the cyclization reactions to give the molecular backbone shearone A. In the modification steps, esdpF oxidizes the hydroxy group to a ketone at C-3 and esdpG then attaches hydroxy groups at both C-11 and C-12. After that, esdpI hydroxylates at C-20 and esdpH hydroxylates at C-6'. The ether bridge is generated by nucleophilic attack of the hydroxy group at C-20 to the carbonyl carbon at C-3. EsdpH can also functions prior to esdpI. The different combinations of these modification enzymes lead to the production of diverse shearone derivatives, shearone I being the end product of the pathway. The alpha-ketoglutarate-dependent dioxygenase esdpJ seems not to be involved in this pathway. This Penicillium shearii (Eupenicillium shearii) protein is FAD-dependent monooxygenase esdpE.